Reading from the N-terminus, the 201-residue chain is uncharacterized protein (201 aa).

May have a role in tissue tropism within the insect larvae. This is an uncharacterized protein from Lepidoptera (butterflies and moths).